Reading from the N-terminus, the 418-residue chain is UPF0754 membrane protein alr5253 (418 aa).

The next 2 membrane-spanning stretches (helical) occupy residues 10–30 (WSHL…GYFT) and 394–414 (IVSL…AFFI).

It belongs to the UPF0754 family.

Its subcellular location is the cell inner membrane. This chain is UPF0754 membrane protein alr5253, found in Nostoc sp. (strain PCC 7120 / SAG 25.82 / UTEX 2576).